A 933-amino-acid chain; its full sequence is Phosphoenolpyruvate carboxylase (933 aa).

Catalysis depends on residues H158 and K592.

The protein belongs to the PEPCase type 1 family. The cofactor is Mg(2+).

It carries out the reaction oxaloacetate + phosphate = phosphoenolpyruvate + hydrogencarbonate. In terms of biological role, forms oxaloacetate, a four-carbon dicarboxylic acid source for the tricarboxylic acid cycle. The protein is Phosphoenolpyruvate carboxylase of Nitrosomonas europaea (strain ATCC 19718 / CIP 103999 / KCTC 2705 / NBRC 14298).